The primary structure comprises 91 residues: MAENNKKSTAYIQRMRTLKFYQKMASARIPITVYLHDQREVKAEFGAIDSSESKLAVSNLQTDWGVINRAVIRTGDVVGIEYNLVQEEGEL.

The Sm domain maps to 18 to 86; that stretch reads LKFYQKMASA…VVGIEYNLVQ (69 aa).

It belongs to the gemin-7 family. As to quaternary structure, part of the core SMN complex at least composed of smn1, yip11/gem2, gem6, gem7 and gem8. Interacts with gem6; the interaction is direct. Interacts with gem8; the interaction is direct.

The sequence is that of Gem-associated protein 7 homolog from Schizosaccharomyces pombe (strain 972 / ATCC 24843) (Fission yeast).